The chain runs to 927 residues: LPS-assembly protein LptD (927 aa).

A signal peptide spans 1–22; sequence MALKSPAFRKKFPLLVTGSLLA. Residues 60–100 form a disordered region; it reads LPPRPVHSTASVSSNGTVTSESSSSGEQVAGPQLVTEAKGK. Positions 70–86 are enriched in low complexity; the sequence is SVSSNGTVTSESSSSGE.

It belongs to the LptD family. Component of the lipopolysaccharide transport and assembly complex. Interacts with LptE and LptA.

It is found in the cell outer membrane. Together with LptE, is involved in the assembly of lipopolysaccharide (LPS) at the surface of the outer membrane. This Pseudomonas syringae pv. tomato (strain ATCC BAA-871 / DC3000) protein is LPS-assembly protein LptD.